A 483-amino-acid polypeptide reads, in one-letter code: Regulatory protein ViaA (483 aa).

It belongs to the ViaA family. In terms of assembly, homodimer. Interacts with RavA.

It localises to the cytoplasm. Functionally, component of the RavA-ViaA chaperone complex, which may act on the membrane to optimize the function of some of the respiratory chains. ViaA stimulates the ATPase activity of RavA. The sequence is that of Regulatory protein ViaA from Shigella boydii serotype 18 (strain CDC 3083-94 / BS512).